We begin with the raw amino-acid sequence, 186 residues long: Elongation factor P (186 aa).

Belongs to the elongation factor P family.

The protein resides in the cytoplasm. It functions in the pathway protein biosynthesis; polypeptide chain elongation. In terms of biological role, involved in peptide bond synthesis. Stimulates efficient translation and peptide-bond synthesis on native or reconstituted 70S ribosomes in vitro. Probably functions indirectly by altering the affinity of the ribosome for aminoacyl-tRNA, thus increasing their reactivity as acceptors for peptidyl transferase. This Neisseria gonorrhoeae (strain NCCP11945) protein is Elongation factor P.